Reading from the N-terminus, the 455-residue chain is Glutamate-1-semialdehyde 2,1-aminomutase (455 aa).

The residue at position 286 (K286) is an N6-(pyridoxal phosphate)lysine.

This sequence belongs to the class-III pyridoxal-phosphate-dependent aminotransferase family. HemL subfamily. Homodimer. Pyridoxal 5'-phosphate is required as a cofactor.

The protein resides in the cytoplasm. It catalyses the reaction (S)-4-amino-5-oxopentanoate = 5-aminolevulinate. The protein operates within porphyrin-containing compound metabolism; protoporphyrin-IX biosynthesis; 5-aminolevulinate from L-glutamyl-tRNA(Glu): step 2/2. This Clavibacter sepedonicus (Clavibacter michiganensis subsp. sepedonicus) protein is Glutamate-1-semialdehyde 2,1-aminomutase.